The chain runs to 27 residues: Delta-conotoxin TxVIB (27 aa).

Cystine bridges form between Cys2–Cys17, Cys9–Cys21, and Cys16–Cys26.

Belongs to the conotoxin O1 superfamily. As to expression, expressed by the venom duct.

It localises to the secreted. In terms of biological role, delta-conotoxins bind to site 6 of voltage-gated sodium channels (Nav) and inhibit the inactivation process. Induces membrane depolarization and spontaneous repetitive firing of neurons. The sequence is that of Delta-conotoxin TxVIB from Conus textile (Cloth-of-gold cone).